The sequence spans 1204 residues: Cingulin (1204 aa).

A head region spans residues 7-357 (MAEPRGPVDH…GVISSGSSKA (351 aa)). The tract at residues 25 to 48 (EPVSGAEMGTLRRGGRRPAKDARA) is disordered. A ZIM motif is present at residues 48–62 (ASTYGVAVRVQGIAG). Positions 54–67 (AVRVQGIAGQPFVV) are interaction with TJP1/ZO1. Disordered regions lie at residues 68 to 174 (LNSG…DTAP) and 186 to 266 (DGQL…FSRA). Residues 93–119 (ALSSDSELPENPYSQVQGFPAPSQSST) are compositionally biased toward polar residues. A phosphoserine mark is found at S95, S96, S98, S135, S137, S140, S155, S165, S214, and S217. Residues 207–231 (EQRKRSKSLDSRLPRDTLEERERQS) show a composition bias toward basic and acidic residues. The span at 232-245 (TNHWNPSTKYNNHV) shows a compositional bias: polar residues. The segment covering 247–261 (SLKQPAQSPSPSPLS) has biased composition (low complexity). 4 positions are modified to phosphoserine: S258, S276, S338, and S351. Positions 358-1161 (MAGQGELARK…SLEKDSWRKA (804 aa)) form a coiled coil. A disordered region spans residues 379–398 (VKKRQKLEPSRAGLERQLEE). An N6-acetyllysine modification is found at K579. A disordered region spans residues 1161 to 1182 (ASRSAAESALKHEGLSSDEEFD). The tail stretch occupies residues 1162-1204 (SRSAAESALKHEGLSSDEEFDSVYDPSSIASLLTESNLQTSSC). 3 positions are modified to phosphoserine: S1176, S1177, and S1183.

Belongs to the cingulin family. Homodimer. Interacts with TJP1/ZO1 and SPEF1.

The protein resides in the cell junction. The protein localises to the tight junction. In terms of biological role, probably plays a role in the formation and regulation of the tight junction (TJ) paracellular permeability barrier. The protein is Cingulin of Plecturocebus moloch (Dusky titi monkey).